We begin with the raw amino-acid sequence, 541 residues long: 2-succinyl-5-enolpyruvyl-6-hydroxy-3-cyclohexene-1-carboxylate synthase (541 aa).

This sequence belongs to the TPP enzyme family. MenD subfamily. As to quaternary structure, homodimer. It depends on Mg(2+) as a cofactor. Mn(2+) is required as a cofactor. The cofactor is thiamine diphosphate.

The catalysed reaction is isochorismate + 2-oxoglutarate + H(+) = 5-enolpyruvoyl-6-hydroxy-2-succinyl-cyclohex-3-ene-1-carboxylate + CO2. Its pathway is quinol/quinone metabolism; 1,4-dihydroxy-2-naphthoate biosynthesis; 1,4-dihydroxy-2-naphthoate from chorismate: step 2/7. The protein operates within quinol/quinone metabolism; menaquinone biosynthesis. Catalyzes the thiamine diphosphate-dependent decarboxylation of 2-oxoglutarate and the subsequent addition of the resulting succinic semialdehyde-thiamine pyrophosphate anion to isochorismate to yield 2-succinyl-5-enolpyruvyl-6-hydroxy-3-cyclohexene-1-carboxylate (SEPHCHC). The chain is 2-succinyl-5-enolpyruvyl-6-hydroxy-3-cyclohexene-1-carboxylate synthase from Leuconostoc mesenteroides subsp. mesenteroides (strain ATCC 8293 / DSM 20343 / BCRC 11652 / CCM 1803 / JCM 6124 / NCDO 523 / NBRC 100496 / NCIMB 8023 / NCTC 12954 / NRRL B-1118 / 37Y).